Here is a 341-residue protein sequence, read N- to C-terminus: UPF0324 membrane protein SMU_2059c (341 aa).

Transmembrane regions (helical) follow at residues 7 to 24, 28 to 47, 68 to 85, 90 to 107, 120 to 142, 147 to 169, 178 to 200, 211 to 233, 254 to 276, 291 to 310, and 317 to 339; these read KLSG…AWFL, FPLV…LAIF, FAVV…VLTV, LPII…AFLL, LVGV…VIQA, IAQS…PTLG, GFAL…AAAW, GATI…LSFY, VFPM…TALG, FCIV…VKLV, and IVLG…HLLG.

This sequence belongs to the UPF0324 family.

The protein localises to the cell membrane. In Streptococcus mutans serotype c (strain ATCC 700610 / UA159), this protein is UPF0324 membrane protein SMU_2059c.